A 351-amino-acid chain; its full sequence is Tetraacyldisaccharide 4'-kinase (351 aa).

61–68 contacts ATP; that stretch reads TAGGTGKT.

It belongs to the LpxK family.

It carries out the reaction a lipid A disaccharide + ATP = a lipid IVA + ADP + H(+). It functions in the pathway glycolipid biosynthesis; lipid IV(A) biosynthesis; lipid IV(A) from (3R)-3-hydroxytetradecanoyl-[acyl-carrier-protein] and UDP-N-acetyl-alpha-D-glucosamine: step 6/6. Its function is as follows. Transfers the gamma-phosphate of ATP to the 4'-position of a tetraacyldisaccharide 1-phosphate intermediate (termed DS-1-P) to form tetraacyldisaccharide 1,4'-bis-phosphate (lipid IVA). This chain is Tetraacyldisaccharide 4'-kinase, found in Xanthomonas campestris pv. campestris (strain 8004).